The chain runs to 443 residues: UDP-N-acetylmuramate--L-alanine ligase (443 aa).

ATP is bound at residue 110–116 (GAHGKTS).

It belongs to the MurCDEF family.

It localises to the cytoplasm. The enzyme catalyses UDP-N-acetyl-alpha-D-muramate + L-alanine + ATP = UDP-N-acetyl-alpha-D-muramoyl-L-alanine + ADP + phosphate + H(+). Its pathway is cell wall biogenesis; peptidoglycan biosynthesis. In terms of biological role, cell wall formation. The chain is UDP-N-acetylmuramate--L-alanine ligase from Streptococcus equi subsp. equi (strain 4047).